The following is a 502-amino-acid chain: Solute carrier family 2, facilitated glucose transporter member 5 (502 aa).

The residue at position 1 (Met1) is an N-acetylmethionine. The Cytoplasmic segment spans residues Met1–Ala17. A helical transmembrane segment spans residues Leu18–Val38. Residue Tyr31 coordinates D-fructose. The Extracellular segment spans residues Asn39 to Thr67. Asn50 is a glycosylation site (N-linked (GlcNAc...) asparagine). The chain crosses the membrane as a helical span at residues Leu68 to Phe90. At Leu91–Arg97 the chain is on the cytoplasmic side. A helical membrane pass occupies residues Lys98 to Ser118. Residues Lys119–Glu125 lie on the Extracellular side of the membrane. The helical transmembrane segment at Ile126–Tyr148 threads the bilayer. At Leu149–Ala160 the chain is on the cytoplasmic side. Residues Leu161–Leu181 traverse the membrane as a helical segment. A D-fructose-binding site is contributed by Gln166. The Extracellular portion of the chain corresponds to Arg182–Trp191. A helical membrane pass occupies residues Pro192–Phe212. The Cytoplasmic segment spans residues Pro213–Gln276. A helical transmembrane segment spans residues Leu277–Tyr297. D-fructose-binding positions include Gln287 and Ile295–Tyr297. The Extracellular portion of the chain corresponds to Tyr298 to Asp312. The helical transmembrane segment at Val313–Phe333 threads the bilayer. At Val334–Arg341 the chain is on the cytoplasmic side. A helical membrane pass occupies residues Asn342 to Leu362. The Extracellular segment spans residues Ala363–Trp370. Residues Met371–Ile393 traverse the membrane as a helical segment. A D-fructose-binding site is contributed by His386. Residues Pro394 to Tyr411 are Cytoplasmic-facing. The chain crosses the membrane as a helical span at residues Met412–Ile432. A D-fructose-binding site is contributed by His418–Trp419. The Extracellular segment spans residues Gln433 to Pro438. A helical transmembrane segment spans residues Tyr439–Val459. Over Pro460–Gln502 the chain is Cytoplasmic.

This sequence belongs to the major facilitator superfamily. Sugar transporter (TC 2.A.1.1) family. Glucose transporter subfamily. Detected in jejunum. Detected in kidney, skeletal muscle, brain and adipose tissue (at protein level). Detected in small intestine and in kidney, and at much lower levels in brain. Detected in enterocytes in duodenum, jejunum, and ileum.

Its subcellular location is the apical cell membrane. It localises to the cell membrane. The protein localises to the sarcolemma. It catalyses the reaction D-fructose(out) = D-fructose(in). Fructose uptake is inhibited by mercury ions. Fructose uptake is only slightly inhibited by cytochalasin B. Functions as a fructose transporter that has only low activity with other monosaccharides. Can mediate the uptake of deoxyglucose, but with low efficiency. Essential for fructose uptake in the small intestine. Plays a role in the regulation of salt uptake and blood pressure in response to dietary fructose. Required for the development of high blood pressure in response to high dietary fructose intake. The chain is Solute carrier family 2, facilitated glucose transporter member 5 from Rattus norvegicus (Rat).